A 518-amino-acid polypeptide reads, in one-letter code: 2-isopropylmalate synthase (518 aa).

In terms of domain architecture, Pyruvate carboxyltransferase spans 4 to 266 (INFFDTTLRD…ESTIQLNEIK (263 aa)). Mn(2+) is bound by residues D13, H201, H203, and N237. The regulatory domain stretch occupies residues 391–518 (DFISLQVHYG…GLSKQAAVGS (128 aa)).

Belongs to the alpha-IPM synthase/homocitrate synthase family. LeuA type 1 subfamily. As to quaternary structure, homodimer. Mn(2+) is required as a cofactor.

It is found in the cytoplasm. The enzyme catalyses 3-methyl-2-oxobutanoate + acetyl-CoA + H2O = (2S)-2-isopropylmalate + CoA + H(+). It functions in the pathway amino-acid biosynthesis; L-leucine biosynthesis; L-leucine from 3-methyl-2-oxobutanoate: step 1/4. In terms of biological role, catalyzes the condensation of the acetyl group of acetyl-CoA with 3-methyl-2-oxobutanoate (2-ketoisovalerate) to form 3-carboxy-3-hydroxy-4-methylpentanoate (2-isopropylmalate). The polypeptide is 2-isopropylmalate synthase (Bacillus licheniformis (strain ATCC 14580 / DSM 13 / JCM 2505 / CCUG 7422 / NBRC 12200 / NCIMB 9375 / NCTC 10341 / NRRL NRS-1264 / Gibson 46)).